The following is a 157-amino-acid chain: Ribonuclease H (157 aa).

One can recognise an RNase H type-1 domain in the interval 1–146 (MPDLFAYTDG…ADELARAGMA (146 aa)). 4 residues coordinate Mg(2+): Asp9, Glu52, Asp74, and Asp138.

This sequence belongs to the RNase H family. As to quaternary structure, monomer. It depends on Mg(2+) as a cofactor.

Its subcellular location is the cytoplasm. The enzyme catalyses Endonucleolytic cleavage to 5'-phosphomonoester.. Functionally, endonuclease that specifically degrades the RNA of RNA-DNA hybrids. This Ruegeria sp. (strain TM1040) (Silicibacter sp.) protein is Ribonuclease H.